A 170-amino-acid chain; its full sequence is Peptide deformylase 1 (170 aa).

2 residues coordinate Fe cation: Cys92 and His135. Glu136 is an active-site residue. Fe cation is bound at residue His139.

This sequence belongs to the polypeptide deformylase family. The cofactor is Fe(2+).

It catalyses the reaction N-terminal N-formyl-L-methionyl-[peptide] + H2O = N-terminal L-methionyl-[peptide] + formate. In terms of biological role, removes the formyl group from the N-terminal Met of newly synthesized proteins. Requires at least a dipeptide for an efficient rate of reaction. N-terminal L-methionine is a prerequisite for activity but the enzyme has broad specificity at other positions. This Coxiella burnetii (strain RSA 493 / Nine Mile phase I) protein is Peptide deformylase 1.